A 190-amino-acid chain; its full sequence is Xanthine phosphoribosyltransferase (190 aa).

Positions 20 and 27 each coordinate xanthine. 128 to 132 (ANGKA) contacts 5-phospho-alpha-D-ribose 1-diphosphate. Lys156 is a xanthine binding site.

Belongs to the purine/pyrimidine phosphoribosyltransferase family. Xpt subfamily. In terms of assembly, homodimer.

It is found in the cytoplasm. It catalyses the reaction XMP + diphosphate = xanthine + 5-phospho-alpha-D-ribose 1-diphosphate. It participates in purine metabolism; XMP biosynthesis via salvage pathway; XMP from xanthine: step 1/1. Converts the preformed base xanthine, a product of nucleic acid breakdown, to xanthosine 5'-monophosphate (XMP), so it can be reused for RNA or DNA synthesis. The protein is Xanthine phosphoribosyltransferase of Ruminiclostridium cellulolyticum (strain ATCC 35319 / DSM 5812 / JCM 6584 / H10) (Clostridium cellulolyticum).